The following is a 494-amino-acid chain: NAD(P)H-quinone oxidoreductase subunit 2 B, chloroplastic (494 aa).

14 consecutive transmembrane segments (helical) span residues 13–33 (SILP…IDLI), 39–59 (TPWL…ILLF), 81–101 (IFRL…IDYI), 107–127 (ALTE…FLCC), 131–151 (LVTI…LSGY), 166–186 (LLMG…LYGL), 211–231 (MFIS…LVPF), 243–263 (PTPV…ALAT), 277–297 (WHLL…FIAV), 305–325 (MLAY…IAAE), 336–356 (YMLI…LFGL), 378–398 (LSLV…GFFG), 411–433 (LYFL…LKII), and 468–488 (MIIC…IIAI).

The protein belongs to the complex I subunit 2 family. In terms of assembly, NDH is composed of at least 16 different subunits, 5 of which are encoded in the nucleus.

The protein localises to the plastid. It is found in the chloroplast thylakoid membrane. The catalysed reaction is a plastoquinone + NADH + (n+1) H(+)(in) = a plastoquinol + NAD(+) + n H(+)(out). It catalyses the reaction a plastoquinone + NADPH + (n+1) H(+)(in) = a plastoquinol + NADP(+) + n H(+)(out). Functionally, NDH shuttles electrons from NAD(P)H:plastoquinone, via FMN and iron-sulfur (Fe-S) centers, to quinones in the photosynthetic chain and possibly in a chloroplast respiratory chain. The immediate electron acceptor for the enzyme in this species is believed to be plastoquinone. Couples the redox reaction to proton translocation, and thus conserves the redox energy in a proton gradient. This is NAD(P)H-quinone oxidoreductase subunit 2 B, chloroplastic from Angiopteris evecta (Mule's foot fern).